A 209-amino-acid polypeptide reads, in one-letter code: Thymidylate kinase (209 aa).

Residue 10-17 (GIDGCGKS) participates in ATP binding.

This sequence belongs to the thymidylate kinase family.

The catalysed reaction is dTMP + ATP = dTDP + ADP. Phosphorylation of dTMP to form dTDP in both de novo and salvage pathways of dTTP synthesis. This Parasynechococcus marenigrum (strain WH8102) protein is Thymidylate kinase.